The following is a 339-amino-acid chain: Ribosomal RNA small subunit methyltransferase C (339 aa).

The protein belongs to the methyltransferase superfamily. RsmC family. Monomer.

The protein resides in the cytoplasm. The enzyme catalyses guanosine(1207) in 16S rRNA + S-adenosyl-L-methionine = N(2)-methylguanosine(1207) in 16S rRNA + S-adenosyl-L-homocysteine + H(+). Specifically methylates the guanine in position 1207 of 16S rRNA in the 30S particle. The chain is Ribosomal RNA small subunit methyltransferase C from Aliivibrio fischeri (strain ATCC 700601 / ES114) (Vibrio fischeri).